A 330-amino-acid chain; its full sequence is Aspartate--ammonia ligase (330 aa).

Belongs to the class-II aminoacyl-tRNA synthetase family. AsnA subfamily.

The protein localises to the cytoplasm. The enzyme catalyses L-aspartate + NH4(+) + ATP = L-asparagine + AMP + diphosphate + H(+). It functions in the pathway amino-acid biosynthesis; L-asparagine biosynthesis; L-asparagine from L-aspartate (ammonia route): step 1/1. This chain is Aspartate--ammonia ligase, found in Photorhabdus laumondii subsp. laumondii (strain DSM 15139 / CIP 105565 / TT01) (Photorhabdus luminescens subsp. laumondii).